A 386-amino-acid chain; its full sequence is S-adenosylmethionine synthase (386 aa).

An ATP-binding site is contributed by His-16. Asp-18 lines the Mg(2+) pocket. Residue Glu-44 coordinates K(+). Residues Glu-57 and Gln-100 each contribute to the L-methionine site. The flexible loop stretch occupies residues 100–110; the sequence is QSPDINQGVDR. Residues 164–166, 230–231, Asp-239, 245–246, Ala-262, and Lys-266 each bind ATP; these read DGK, KF, and RK. L-methionine is bound at residue Asp-239. Lys-270 contacts L-methionine.

The protein belongs to the AdoMet synthase family. As to quaternary structure, homotetramer; dimer of dimers. Requires Mg(2+) as cofactor. It depends on K(+) as a cofactor.

The protein localises to the cytoplasm. It catalyses the reaction L-methionine + ATP + H2O = S-adenosyl-L-methionine + phosphate + diphosphate. It functions in the pathway amino-acid biosynthesis; S-adenosyl-L-methionine biosynthesis; S-adenosyl-L-methionine from L-methionine: step 1/1. Functionally, catalyzes the formation of S-adenosylmethionine (AdoMet) from methionine and ATP. The overall synthetic reaction is composed of two sequential steps, AdoMet formation and the subsequent tripolyphosphate hydrolysis which occurs prior to release of AdoMet from the enzyme. This Wolinella succinogenes (strain ATCC 29543 / DSM 1740 / CCUG 13145 / JCM 31913 / LMG 7466 / NCTC 11488 / FDC 602W) (Vibrio succinogenes) protein is S-adenosylmethionine synthase.